Consider the following 1430-residue polypeptide: Target of rapamycin complex 2 subunit TSC11 (1430 aa).

The disordered stretch occupies residues 1 to 62; that stretch reads MSIPHSAKQS…TITNESSKRN (62 aa). Polar residues-rich tracts occupy residues 7–26 and 35–44; these read AKQS…TTPL and NSSTQISSAK. Ser19 carries the post-translational modification Phosphoserine. Positions 45–57 are enriched in low complexity; that stretch reads NITSSSPSTITNE. Ser81, Ser84, Ser87, and Ser141 each carry phosphoserine. A coiled-coil region spans residues 91 to 180; it reads ARRTRSTMTK…EKHIFDLKQQ (90 aa). The interval 182–285 is disordered; that stretch reads DKKRQRSLTT…NLTGDTEKDL (104 aa). Residues 233–265 show a composition bias toward polar residues; sequence TTPTSGTERNSQQNLNRNSTVNSRNNENHSTLS. Residues 995–1100 form the N-terminal Ras-GEF domain; it reads SVVAVADQAL…FQQKSRLPLH (106 aa).

The protein belongs to the RICTOR family. The target of rapamycin complex 2 (TORC2) is composed of at least AVO1, AVO2, BIT61, LST8, TOR2 and TSC11. TORC2 forms a homodimer. Contrary to TORC1, TORC2 does not bind to and is not sensitive to FKBP-rapamycin. TSC11 binds to the N-terminal HEAT repeat region in TOR2 and is required for TORC2 integrity by tethering AVO1 and AVO2 to the complex. In terms of processing, phosphorylated by TOR2; when part of TORC2.

It localises to the cell membrane. Its subcellular location is the vacuole membrane. Its function is as follows. Essential component of TORC2, which regulates cell cycle-dependent polarization of the actin-cytoskeleton and cell wall integrity. TORC2 controls polarity of the actin cytoskeleton, which is required for orienting the secretory pathway toward discrete growth sites, via the RHO1/PKC1/MAPK cell integrity pathway. TSC11 may exert its functions through two distinct mechanisms, one mediated by AVO1 and the other mediated by AVO2 and SLM1. The polypeptide is Target of rapamycin complex 2 subunit TSC11 (TSC11) (Saccharomyces cerevisiae (strain ATCC 204508 / S288c) (Baker's yeast)).